We begin with the raw amino-acid sequence, 189 residues long: Peptidyl-tRNA hydrolase (189 aa).

A tRNA-binding site is contributed by Tyr15. The Proton acceptor role is filled by His20. TRNA-binding residues include Phe66, Asn68, and Asn114.

The protein belongs to the PTH family. Monomer.

The protein localises to the cytoplasm. The enzyme catalyses an N-acyl-L-alpha-aminoacyl-tRNA + H2O = an N-acyl-L-amino acid + a tRNA + H(+). In terms of biological role, hydrolyzes ribosome-free peptidyl-tRNAs (with 1 or more amino acids incorporated), which drop off the ribosome during protein synthesis, or as a result of ribosome stalling. Catalyzes the release of premature peptidyl moieties from peptidyl-tRNA molecules trapped in stalled 50S ribosomal subunits, and thus maintains levels of free tRNAs and 50S ribosomes. This chain is Peptidyl-tRNA hydrolase, found in Dichelobacter nodosus (strain VCS1703A).